The sequence spans 299 residues: MASNCEKMLSKIKIPLPDMLNAVLDLDSSAVIIDQIKNLIKICWSKEEMDRLRNSAGGDKEVLGKCEEIFGELMMVPRIEPKLRVFAFKVEYPSRVSDLKMWMHTIIAATKEITGSVKLFRIMQTSLTMQVLRGSNVECGLDSLVKLCDNVYLMHDFCKLLDFGNDLVHLEAASRIELETITNKMQELFDIEEEVNDEFLASENDGANFVGYRNVVHDFLCTIDGDKQLLNILYAEVGGLVNSYIAEYPSGVRFKEATNILTRFVETFYKSREEIERQAEAEKEILEKRKMNIKQNGNL.

In terms of domain architecture, FH2 spans 1-295 (MASNCEKMLS…LEKRKMNIKQ (295 aa)).

This sequence belongs to the formin-like family. Class-II subfamily.

The protein is Formin-like protein 12 (FH12) of Arabidopsis thaliana (Mouse-ear cress).